The following is a 178-amino-acid chain: Large ribosomal subunit protein bL25 (178 aa).

The protein belongs to the bacterial ribosomal protein bL25 family. CTC subfamily. As to quaternary structure, part of the 50S ribosomal subunit; part of the 5S rRNA/L5/L18/L25 subcomplex. Contacts the 5S rRNA. Binds to the 5S rRNA independently of L5 and L18.

Its function is as follows. This is one of the proteins that binds to the 5S RNA in the ribosome where it forms part of the central protuberance. The chain is Large ribosomal subunit protein bL25 from Campylobacter jejuni subsp. jejuni serotype O:23/36 (strain 81-176).